We begin with the raw amino-acid sequence, 330 residues long: Aspartate--ammonia ligase (330 aa).

It belongs to the class-II aminoacyl-tRNA synthetase family. AsnA subfamily.

Its subcellular location is the cytoplasm. It catalyses the reaction L-aspartate + NH4(+) + ATP = L-asparagine + AMP + diphosphate + H(+). The protein operates within amino-acid biosynthesis; L-asparagine biosynthesis; L-asparagine from L-aspartate (ammonia route): step 1/1. The sequence is that of Aspartate--ammonia ligase from Escherichia coli O17:K52:H18 (strain UMN026 / ExPEC).